A 734-amino-acid chain; its full sequence is Photosystem I P700 chlorophyll a apoprotein A2 (734 aa).

8 consecutive transmembrane segments (helical) span residues 46 to 69 (IFAS…FHVA), 135 to 158 (LYTG…LHLQ), 175 to 199 (LNHH…HVAI), 273 to 291 (IAHH…GHMY), 330 to 353 (LHFQ…QHMY), 369 to 395 (AALY…IFFI), 417 to 439 (AIIS…LYVH), and 517 to 535 (FLVH…SIPV). Residues Cys-559 and Cys-568 each coordinate [4Fe-4S] cluster. The next 2 membrane-spanning stretches (helical) occupy residues 575-596 (AFYL…YWHW) and 643-665 (LSVW…MFLI). Positions 654, 662, and 670 each coordinate chlorophyll a. Phylloquinone is bound at residue Trp-671. Residues 707–727 (LVGLAHFSVGYIFTYAAFLIA) form a helical membrane-spanning segment.

This sequence belongs to the PsaA/PsaB family. The PsaA/B heterodimer binds the P700 chlorophyll special pair and subsequent electron acceptors. PSI consists of a core antenna complex that captures photons, and an electron transfer chain that converts photonic excitation into a charge separation. The eukaryotic PSI reaction center is composed of at least 11 subunits. P700 is a chlorophyll a/chlorophyll a' dimer, A0 is one or more chlorophyll a, A1 is one or both phylloquinones and FX is a shared 4Fe-4S iron-sulfur center. serves as cofactor.

The protein localises to the plastid. The protein resides in the chloroplast thylakoid membrane. It catalyses the reaction reduced [plastocyanin] + hnu + oxidized [2Fe-2S]-[ferredoxin] = oxidized [plastocyanin] + reduced [2Fe-2S]-[ferredoxin]. Its function is as follows. PsaA and PsaB bind P700, the primary electron donor of photosystem I (PSI), as well as the electron acceptors A0, A1 and FX. PSI is a plastocyanin-ferredoxin oxidoreductase, converting photonic excitation into a charge separation, which transfers an electron from the donor P700 chlorophyll pair to the spectroscopically characterized acceptors A0, A1, FX, FA and FB in turn. Oxidized P700 is reduced on the lumenal side of the thylakoid membrane by plastocyanin. The sequence is that of Photosystem I P700 chlorophyll a apoprotein A2 from Angiopteris evecta (Mule's foot fern).